Consider the following 455-residue polypeptide: GTPase Der (455 aa).

EngA-type G domains are found at residues 4–169 and 178–353; these read PVVA…PPKD and IQMS…EQHR. GTP is bound by residues 10–17, 57–61, 120–123, 184–191, 231–235, and 296–299; these read GRPNVGKS, DTGGL, NKCE, DTAGI, and NKWD. In terms of domain architecture, KH-like spans 354-439; sequence RRVTTSVVNE…PLKLFWRGKQ (86 aa).

The protein belongs to the TRAFAC class TrmE-Era-EngA-EngB-Septin-like GTPase superfamily. EngA (Der) GTPase family. Associates with the 50S ribosomal subunit.

Its function is as follows. GTPase that plays an essential role in the late steps of ribosome biogenesis. The polypeptide is GTPase Der (Synechococcus sp. (strain CC9902)).